The sequence spans 88 residues: MRLFISLPILIVVLAMALEGPAPAQATPDLASTFENLPDKLKEFGSALEDKTRAAIEHIKQKGILTKTRTWFSETFDKVKEKFKTTFA.

Positions 1–26 are cleaved as a signal peptide; the sequence is MRLFISLPILIVVLAMALEGPAPAQA.

It belongs to the apolipoprotein C1 family.

The protein resides in the secreted. Its function is as follows. Inhibitor of lipoprotein binding to the low density lipoprotein (LDL) receptor, LDL receptor-related protein, and very low density lipoprotein (VLDL) receptor. Associates with high density lipoproteins (HDL) and the triacylglycerol-rich lipoproteins in the plasma and makes up about 10% of the protein of the VLDL and 2% of that of HDL. Appears to interfere directly with fatty acid uptake and is also the major plasma inhibitor of cholesteryl ester transfer protein (CETP). Modulates the interaction of APOE with beta-migrating VLDL and inhibits binding of beta-VLDL to the LDL receptor-related protein. Binds free fatty acids and reduces their intracellular esterification. The protein is Apolipoprotein C-I (Apoc1) of Neotoma lepida (Desert woodrat).